Consider the following 357-residue polypeptide: RNA 3'-terminal phosphate cyclase (357 aa).

ATP contacts are provided by residues Gln102 and 293 to 296; that span reads HMGD. The active-site Tele-AMP-histidine intermediate is His319.

It belongs to the RNA 3'-terminal cyclase family. Type 1 subfamily.

The protein localises to the cytoplasm. It carries out the reaction a 3'-end 3'-phospho-ribonucleotide-RNA + ATP = a 3'-end 2',3'-cyclophospho-ribonucleotide-RNA + AMP + diphosphate. Its function is as follows. Catalyzes the conversion of 3'-phosphate to a 2',3'-cyclic phosphodiester at the end of RNA. The mechanism of action of the enzyme occurs in 3 steps: (A) adenylation of the enzyme by ATP; (B) transfer of adenylate to an RNA-N3'P to produce RNA-N3'PP5'A; (C) and attack of the adjacent 2'-hydroxyl on the 3'-phosphorus in the diester linkage to produce the cyclic end product. The biological role of this enzyme is unknown but it is likely to function in some aspects of cellular RNA processing. The sequence is that of RNA 3'-terminal phosphate cyclase from Desulfurococcus amylolyticus (strain DSM 18924 / JCM 16383 / VKM B-2413 / 1221n) (Desulfurococcus kamchatkensis).